The chain runs to 244 residues: 2,5-diamino-6-ribosylamino-4(3H)-pyrimidinone 5'-phosphate reductase (244 aa).

Residues Thr-74, Asp-78, Ile-160, and 183–187 contribute to the NADP(+) site; that span reads GSHVI.

It belongs to the HTP reductase family. In terms of assembly, homodimer.

It catalyses the reaction 2,5-diamino-6-(1-D-ribitylamino)pyrimidin-4(3H)-one 5'-phosphate + NADP(+) = 2,5-diamino-6-(1-D-ribosylamino)pyrimidin-4(3H)-one 5'-phosphate + NADPH + H(+). It carries out the reaction 2,5-diamino-6-(1-D-ribitylamino)pyrimidin-4(3H)-one 5'-phosphate + NAD(+) = 2,5-diamino-6-(1-D-ribosylamino)pyrimidin-4(3H)-one 5'-phosphate + NADH + H(+). The protein operates within cofactor biosynthesis; riboflavin biosynthesis. Functionally, catalyzes an early step in riboflavin biosynthesis, the NADPH-dependent reduction of the ribose side chain of 2,5-diamino-6-ribosylamino-4(3H)-pyrimidinone 5'-phosphate, yielding 2,5-diamino-6-ribitylamino-4(3H)-pyrimidinone 5'-phosphate. The sequence is that of 2,5-diamino-6-ribosylamino-4(3H)-pyrimidinone 5'-phosphate reductase (RIB7) from Candida glabrata (strain ATCC 2001 / BCRC 20586 / JCM 3761 / NBRC 0622 / NRRL Y-65 / CBS 138) (Yeast).